The primary structure comprises 505 residues: ATP synthase subunit alpha, chloroplastic (505 aa).

170–177 (GDRQTGKT) serves as a coordination point for ATP.

Belongs to the ATPase alpha/beta chains family. F-type ATPases have 2 components, CF(1) - the catalytic core - and CF(0) - the membrane proton channel. CF(1) has five subunits: alpha(3), beta(3), gamma(1), delta(1), epsilon(1). CF(0) has four main subunits: a, b, b' and c.

The protein localises to the plastid. It is found in the chloroplast thylakoid membrane. It carries out the reaction ATP + H2O + 4 H(+)(in) = ADP + phosphate + 5 H(+)(out). In terms of biological role, produces ATP from ADP in the presence of a proton gradient across the membrane. The alpha chain is a regulatory subunit. The polypeptide is ATP synthase subunit alpha, chloroplastic (Phaeodactylum tricornutum (strain CCAP 1055/1)).